The sequence spans 344 residues: Serpentine receptor class delta-3 (344 aa).

The next 7 helical transmembrane spans lie at 21 to 41 (IIGY…IILI), 54 to 74 (MLHL…MLAL), 102 to 122 (FLHV…MISF), 142 to 162 (ICIL…SDVA), 203 to 223 (FSAI…IVFF), 259 to 279 (IVPI…FQVV), and 287 to 307 (MPFR…LYFV).

Belongs to the nematode receptor-like protein srd family.

Its subcellular location is the membrane. In Caenorhabditis elegans, this protein is Serpentine receptor class delta-3 (srd-3).